The sequence spans 397 residues: Succinyl-diaminopimelate desuccinylase (397 aa).

Histidine 73 is a binding site for Zn(2+). Residue aspartate 75 is part of the active site. Aspartate 106 contacts Zn(2+). The active-site Proton acceptor is glutamate 140. Residues glutamate 141, glutamate 169, and histidine 366 each contribute to the Zn(2+) site.

The protein belongs to the peptidase M20A family. DapE subfamily. In terms of assembly, homodimer. Zn(2+) serves as cofactor. The cofactor is Co(2+).

It catalyses the reaction N-succinyl-(2S,6S)-2,6-diaminopimelate + H2O = (2S,6S)-2,6-diaminopimelate + succinate. Its pathway is amino-acid biosynthesis; L-lysine biosynthesis via DAP pathway; LL-2,6-diaminopimelate from (S)-tetrahydrodipicolinate (succinylase route): step 3/3. Its function is as follows. Catalyzes the hydrolysis of N-succinyl-L,L-diaminopimelic acid (SDAP), forming succinate and LL-2,6-diaminopimelate (DAP), an intermediate involved in the bacterial biosynthesis of lysine and meso-diaminopimelic acid, an essential component of bacterial cell walls. The protein is Succinyl-diaminopimelate desuccinylase of Rhizobium leguminosarum bv. trifolii (strain WSM2304).